Consider the following 157-residue polypeptide: MSSKSLRLIVVGRLRIPFWRAAAEHYYKRISCWRAIYETIIKDGNSSLSVSQRKAMEGKNILAALEPIDIPICLDEKGKSISSQEFANFLRNYFENTTKRPCFIIGGAFGLDSSVCNIANDCLSLGNITFPHELARVIFLEQVYRAETLLRNIPYHH.

Residues leucine 74, glycine 106, and 125-130 (LGNITF) each bind S-adenosyl-L-methionine.

The protein belongs to the RNA methyltransferase RlmH family. As to quaternary structure, homodimer.

Its subcellular location is the cytoplasm. It catalyses the reaction pseudouridine(1915) in 23S rRNA + S-adenosyl-L-methionine = N(3)-methylpseudouridine(1915) in 23S rRNA + S-adenosyl-L-homocysteine + H(+). In terms of biological role, specifically methylates the pseudouridine at position 1915 (m3Psi1915) in 23S rRNA. The chain is Ribosomal RNA large subunit methyltransferase H from Lawsonia intracellularis (strain PHE/MN1-00).